A 378-amino-acid polypeptide reads, in one-letter code: Zinc transporter 7 (378 aa).

At 1-37 (MLPLSIKDDEYKPPKFNLFGKISGWFRSILSDKTSRN) the chain is on the cytoplasmic side. A helical membrane pass occupies residues 38–58 (LFFFLCLNLSFAFVELLYGIW). Over 59 to 67 (SNCLGLISD) the chain is Lumenal. Residues 68-88 (SFHMFFDSTAILAGLAASVIS) traverse the membrane as a helical segment. Residues 89–102 (KWRDNDAFSYGYVR) lie on the Cytoplasmic side of the membrane. A helical transmembrane segment spans residues 103–123 (AEVLAGFVNGLFLIFTAFFIF). At 124–140 (SEGVERALAPPDVHHER) the chain is on the lumenal side. The chain crosses the membrane as a helical span at residues 141-161 (LLLVSILGFVVNLVGIFVFNH). Residues 161–220 (HGGHGHSHGSGHGHSHSLFNGALDHSHGHEDHCHSHGAKHGGAHSHDHDHAHGHGHLHSH) form a his-rich loop region. The Cytoplasmic segment spans residues 162–238 (GGHGHSHGSG…AGPSRQILQG (77 aa)). The tract at residues 186–228 (SHGHEDHCHSHGAKHGGAHSHDHDHAHGHGHLHSHDGPSFKET) is disordered. The segment covering 204 to 224 (HSHDHDHAHGHGHLHSHDGPS) has biased composition (basic and acidic residues). Residues 239-259 (VFLHILADTLGSIGVIASAIM) form a helical membrane-spanning segment. Over 260 to 264 (MQNFG) the chain is Lumenal. Residues 265–285 (LMIADPICSILIAILIVVSVI) traverse the membrane as a helical segment. At 286 to 378 (PLLRESIGIL…LYVQIDFAAM (93 aa)) the chain is on the cytoplasmic side.

It belongs to the cation diffusion facilitator (CDF) transporter (TC 2.A.4) family. SLC30A subfamily. As to quaternary structure, homooligomer.

Its subcellular location is the golgi apparatus membrane. The protein localises to the cytoplasmic vesicle. The protein resides in the golgi apparatus. It is found in the trans-Golgi network. It localises to the sarcoplasmic reticulum. Its subcellular location is the mitochondrion. It carries out the reaction Zn(2+)(in) = Zn(2+)(out). In terms of biological role, zinc ion transporter mediating zinc entry from the cytosol into the lumen of organelles along the secretory pathway. By contributing to zinc ion homeostasis within the early secretory pathway, regulates the activation and folding of enzymes like alkaline phosphatases. The protein is Zinc transporter 7 of Rattus norvegicus (Rat).